The chain runs to 527 residues: Estrogen receptor beta (527 aa).

Positions 1–145 (MDVKNSPSSL…SPSSKRDAHF (145 aa)) are modulating. Phosphoserine; by MAPK occurs at positions 84 and 102. 2 NR C4-type zinc fingers span residues 146 to 166 (CAVCSDYASGYHYGVWSCEGC) and 182 to 206 (CPATNQCTIDKNRRKSCQACRLRKC). Positions 146–211 (CAVCSDYASG…RLRKCYEVGM (66 aa)) form a DNA-binding region, nuclear receptor. Residues 261–495 (SPEQLVLTLL…DLLLEMLNAH (235 aa)) enclose the NR LBD domain.

The protein belongs to the nuclear hormone receptor family. NR3 subfamily. In terms of assembly, binds DNA as a homodimer. Can form a heterodimer with ESR1. Interacts with NCOA1, NCOA3, NCOA5 and NCOA6 coactivators, leading to a strong increase of transcription of target genes. Interacts with UBE1C and AKAP13. Interacts with DNTTIP2. Interacts with CCDC62 in the presence of estradiol/E2; this interaction seems to enhance the transcription of target genes. Interacts with DNAAF4. Interacts with PRMT2. Interacts with CCAR2 (via N-terminus) in a ligand-independent manner. Interacts with RBM39, in the presence of estradiol (E2). Interacts with STUB1/CHIP. In terms of processing, phosphorylation at Ser-84 and Ser-102 recruits NCOA1. As to expression, present in granulosa cells of antral follicles in various stages of follicular growth.

The protein resides in the nucleus. In terms of biological role, nuclear hormone receptor. Binds estrogens with an affinity similar to that of ESR1ESR1/ER-alpha, and activates expression of reporter genes containing estrogen response elements (ERE) in an estrogen-dependent manner. This Bos taurus (Bovine) protein is Estrogen receptor beta (ESR2).